The following is a 122-amino-acid chain: Large ribosomal subunit protein uL14 (122 aa).

It belongs to the universal ribosomal protein uL14 family. As to quaternary structure, part of the 50S ribosomal subunit. Forms a cluster with proteins L3 and L19. In the 70S ribosome, L14 and L19 interact and together make contacts with the 16S rRNA in bridges B5 and B8.

In terms of biological role, binds to 23S rRNA. Forms part of two intersubunit bridges in the 70S ribosome. The sequence is that of Large ribosomal subunit protein uL14 from Bradyrhizobium diazoefficiens (strain JCM 10833 / BCRC 13528 / IAM 13628 / NBRC 14792 / USDA 110).